The sequence spans 332 residues: NADH-quinone oxidoreductase subunit H (332 aa).

The next 9 membrane-spanning stretches (helical) occupy residues F4–S24, I44–L64, F78–I98, V120–G140, V165–I185, F194–I214, I255–I275, I279–F299, and Y312–L332.

The protein belongs to the complex I subunit 1 family. As to quaternary structure, NDH-1 is composed of 14 different subunits. Subunits NuoA, H, J, K, L, M, N constitute the membrane sector of the complex.

It is found in the cell inner membrane. The catalysed reaction is a quinone + NADH + 5 H(+)(in) = a quinol + NAD(+) + 4 H(+)(out). Its function is as follows. NDH-1 shuttles electrons from NADH, via FMN and iron-sulfur (Fe-S) centers, to quinones in the respiratory chain. The immediate electron acceptor for the enzyme in this species is believed to be ubiquinone. Couples the redox reaction to proton translocation (for every two electrons transferred, four hydrogen ions are translocated across the cytoplasmic membrane), and thus conserves the redox energy in a proton gradient. This subunit may bind ubiquinone. In Campylobacter jejuni subsp. jejuni serotype O:23/36 (strain 81-176), this protein is NADH-quinone oxidoreductase subunit H.